A 160-amino-acid polypeptide reads, in one-letter code: Transcriptional repressor NrdR (160 aa).

Residues 3 to 34 (CPACNYNGTKVLDSRPVQDFGSIRRRRECESC) fold into a zinc finger. The 91-residue stretch at 49 to 139 (LIIVKKDGTR…VYKQFKDINV (91 aa)) folds into the ATP-cone domain.

This sequence belongs to the NrdR family. Zn(2+) is required as a cofactor.

In terms of biological role, negatively regulates transcription of bacterial ribonucleotide reductase nrd genes and operons by binding to NrdR-boxes. This Exiguobacterium sibiricum (strain DSM 17290 / CCUG 55495 / CIP 109462 / JCM 13490 / 255-15) protein is Transcriptional repressor NrdR.